Consider the following 317-residue polypeptide: UAP56-interacting factor (317 aa).

At Met1 the chain carries N-acetylmethionine. Positions Met1–Ser23 are disordered. At Thr14 the chain carries Phosphothreonine. Phosphoserine is present on Ser23. Positions Asn26–Glu44 match the UAP56-binding motif motif. Phosphoserine occurs at positions 60 and 117. Lys139 is covalently cross-linked (Glycyl lysine isopeptide (Lys-Gly) (interchain with G-Cter in SUMO1)). Residue Lys260 forms a Glycyl lysine isopeptide (Lys-Gly) (interchain with G-Cter in SUMO2) linkage.

It belongs to the UIF family. As to quaternary structure, interacts with DDX39B/UAP56 and NXF1; interaction with DDX39B/UAP56 and NXF1 are mutually exclusive. Interacts with SSRP1; required for its recruitment to mRNAs. Interacts with CHTOP.

The protein localises to the nucleus. It localises to the nucleoplasm. Its subcellular location is the nucleus speckle. Required for mRNA export from the nucleus to the cytoplasm. Acts as an adapter that uses the DDX39B/UAP56-NFX1 pathway to ensure efficient mRNA export and delivering to the nuclear pore. Associates with spliced and unspliced mRNAs simultaneously with ALYREF/THOC4. The protein is UAP56-interacting factor (Fyttd1) of Rattus norvegicus (Rat).